The chain runs to 238 residues: Ribonuclease PH (238 aa).

Phosphate contacts are provided by residues R86 and 124–126; that span reads GTR.

The protein belongs to the RNase PH family. Homohexameric ring arranged as a trimer of dimers.

The enzyme catalyses tRNA(n+1) + phosphate = tRNA(n) + a ribonucleoside 5'-diphosphate. Its function is as follows. Phosphorolytic 3'-5' exoribonuclease that plays an important role in tRNA 3'-end maturation. Removes nucleotide residues following the 3'-CCA terminus of tRNAs; can also add nucleotides to the ends of RNA molecules by using nucleoside diphosphates as substrates, but this may not be physiologically important. Probably plays a role in initiation of 16S rRNA degradation (leading to ribosome degradation) during starvation. This is Ribonuclease PH from Maricaulis maris (strain MCS10) (Caulobacter maris).